Consider the following 85-residue polypeptide: Large ribosomal subunit protein bL31B (85 aa).

Belongs to the bacterial ribosomal protein bL31 family. Type B subfamily. As to quaternary structure, part of the 50S ribosomal subunit.

The protein is Large ribosomal subunit protein bL31B of Staphylococcus haemolyticus (strain JCSC1435).